The following is a 584-amino-acid chain: A-type ATP synthase subunit A 2 (584 aa).

227-234 (GGFGTGKT) contributes to the ATP binding site.

This sequence belongs to the ATPase alpha/beta chains family. As to quaternary structure, has multiple subunits with at least A(3), B(3), C, D, E, F, H, I and proteolipid K(x).

Its subcellular location is the cell membrane. It catalyses the reaction ATP + H2O + 4 H(+)(in) = ADP + phosphate + 5 H(+)(out). Component of the A-type ATP synthase that produces ATP from ADP in the presence of a proton gradient across the membrane. The A chain is the catalytic subunit. This is A-type ATP synthase subunit A 2 from Methanospirillum hungatei JF-1 (strain ATCC 27890 / DSM 864 / NBRC 100397 / JF-1).